The chain runs to 348 residues: 4-hydroxyphenylpyruvate dioxygenase (348 aa).

VOC domains follow at residues 11–141 and 151–303; these read GFAF…ITSS and AIDH…IFTE. 3 residues coordinate Fe cation: H154, H232, and E312.

Belongs to the 4HPPD family. The cofactor is Fe cation.

The catalysed reaction is 3-(4-hydroxyphenyl)pyruvate + O2 = homogentisate + CO2. Functionally, catalyzes the transformation of p-hydroxyphenylpyruvate into HGA. Has hemolytic and brown pigment production activity. The polypeptide is 4-hydroxyphenylpyruvate dioxygenase (lly) (Legionella pneumophila (strain Corby)).